The following is a 287-amino-acid chain: MSTYVSSVFSLATMKQNPLKRKRNDEITEEKVVLLMAMHKEDDEHQHTKPSPPSWEILCLVGPYMDPESLAVASCVSTTWSKCFSSEDLWKSLPATRHSIFAKAITKEGAKPAWLSYKRLISEAESAAKRRRNNQPAEPKISLSDLVFIVHVSAGSKEAVVVKQGKDLVFGSNERFQIEADVRDSGFTADMKDVSMSWNVVLRNYERMFLMSETVIKSLDSMIGWFTDELPGTKNRYCDGSNLVGEVKPSFNEDVLDKVVFAIADSRNWKSLFVDDVLRYLQCFLVD.

Residues proline 50–phenylalanine 101 enclose the F-box; degenerate domain.

The chain is Probable F-box protein At5g04010 (NSFBx) from Arabidopsis thaliana (Mouse-ear cress).